Consider the following 413-residue polypeptide: Putative glutamate synthase [NADPH] small chain (413 aa).

Cys-33, Cys-37, Cys-43, and Cys-47 together coordinate [4Fe-4S] cluster.

In terms of assembly, aggregate of 4 catalytic active heterodimers, consisting of a large and a small subunit. It depends on [4Fe-4S] cluster as a cofactor.

It carries out the reaction 2 L-glutamate + NADP(+) = L-glutamine + 2-oxoglutarate + NADPH + H(+). Its pathway is amino-acid biosynthesis; L-glutamate biosynthesis via GLT pathway; L-glutamate from 2-oxoglutarate and L-glutamine (NADP(+) route): step 1/1. It functions in the pathway energy metabolism; nitrogen metabolism. In Cereibacter sphaeroides (Rhodobacter sphaeroides), this protein is Putative glutamate synthase [NADPH] small chain (gltD).